The sequence spans 108 residues: MSTSHPTGLEILEFTFPGSRPAGAIAPVLVGVVGSGNLEVLLEAAAGSDCSVRIETSARGFGPIWEAVLRDFHERHPLAGVRVSINDMGATPAVVSLRLDQAAAEVAS.

Ser35 is modified (O-(phosphoribosyl dephospho-coenzyme A)serine).

This sequence belongs to the MdcC family. Post-translationally, covalently binds the prosthetic group of malonate decarboxylase.

The protein localises to the cytoplasm. Subunit of malonate decarboxylase, it is an acyl carrier protein to which acetyl and malonyl thioester residues are bound via a 2'-(5''-phosphoribosyl)-3'-dephospho-CoA prosthetic group and turn over during the catalytic mechanism. The protein is Malonate decarboxylase acyl carrier protein of Burkholderia cepacia (Pseudomonas cepacia).